Reading from the N-terminus, the 69-residue chain is Large ribosomal subunit protein bL31 (69 aa).

The Zn(2+) site is built by Cys16, Cys18, Cys36, and Cys39.

It belongs to the bacterial ribosomal protein bL31 family. Type A subfamily. In terms of assembly, part of the 50S ribosomal subunit. Requires Zn(2+) as cofactor.

In terms of biological role, binds the 23S rRNA. This is Large ribosomal subunit protein bL31 from Kosmotoga olearia (strain ATCC BAA-1733 / DSM 21960 / TBF 19.5.1).